The chain runs to 92 residues: Large ribosomal subunit protein eL43 (92 aa).

The C4-type zinc-finger motif lies at 39-60 (CSFCGKKTVRRGAAGIWSCHSC).

It belongs to the eukaryotic ribosomal protein eL43 family.

This Candida glabrata (strain ATCC 2001 / BCRC 20586 / JCM 3761 / NBRC 0622 / NRRL Y-65 / CBS 138) (Yeast) protein is Large ribosomal subunit protein eL43 (RPL43).